The chain runs to 362 residues: MSEVTDKTVEFLLRHSASRRPPDIGSLKEKAFERVNWRDAFDRFQETERLTLWETKSELDGVDEGAYRVARDALFPFAVSGSQGAVSFGNRAGHKLREVMEATGVWEHLQRETSGQKGAVVFADVCGGPGAFSQALFEMSRQYKLRMRGFGMTLRNVRGLDWYSSLPLGKFLPTYGIDGTGDIFNLANIEALLSLTIRERLKLVVADGGFNVPFNIANYQETLSGRILFGQWLAALKLLRPGGCFILKLFDTFSPLSRALLYLSTYLYDRVHVVKPRHSRVVNSERYLVCLGFLGTPGPWMEYFEHCYQVGFSDNDSIPKIMPTSWVMEDKTFMKDLKQMNSTIASNQTLALKMVLAKLQPS.

The 208-residue stretch at 87–294 (SFGNRAGHKL…ERYLVCLGFL (208 aa)) folds into the RrmJ-type SAM-dependent 2'-O-MTase domain. S-adenosyl-L-methionine is bound by residues glycine 130 and aspartate 207. Residue lysine 248 is the Proton acceptor of the active site.

The protein localises to the nucleus. The enzyme catalyses a 5'-end (N(7)-methyl 5'-triphosphoguanosine)-ribonucleoside in mRNA + S-adenosyl-L-methionine = a 5'-end (N(7)-methyl 5'-triphosphoguanosine)-(2'-O-methyl-ribonucleoside) in mRNA + S-adenosyl-L-homocysteine + H(+). Its function is as follows. S-adenosyl-L-methionine-dependent methyltransferase that mediates RNA cap1 2'-O-ribose methylation to the 5'-cap structure of spliced leader and U1 small nuclear RNAs. Methylates the ribose of the first nucleotide of a m(7)GpppG-capped RNA to produce m(7)GpppNmp (cap1). Cap1 modification is linked to higher levels of translation. Recognizes a guanosine cap on RNA independent of its N(7) methylation status. This is Cap-specific mRNA (nucleoside-2'-O-)-methyltransferase 1 from Trypanosoma cruzi (strain CL Brener).